Here is a 109-residue protein sequence, read N- to C-terminus: Aquaporin-2 (109 aa).

At 1–6 (SIAFSR) the chain is on the cytoplasmic side. Residues 7 to 27 (AVFSEFLATLLFVFFGLGSAL) traverse the membrane as a helical segment. The Extracellular portion of the chain corresponds to 28 to 35 (NWPQALPS). The chain crosses the membrane as a helical span at residues 36–54 (VLQIAMAFGLAIGTLVQAL). At 55-59 (GHISG) the chain is on the cytoplasmic side. The discontinuously helical intramembrane region spans 60-69 (AHINPAVTVA). Positions 63–65 (NPA) match the NPA 1 motif. The Cytoplasmic segment spans residues 70 to 80 (CLVGCHVSFLR). The helical transmembrane segment at 81-102 (ATFYLAAQLLGAVAGAAILHEI) threads the bilayer. At 103-109 (TPPDIRG) the chain is on the extracellular side.

It belongs to the MIP/aquaporin (TC 1.A.8) family. Homotetramer. In terms of processing, serine phosphorylation is necessary and sufficient for expression at the apical membrane. Endocytosis is not phosphorylation-dependent. N-glycosylated.

It localises to the apical cell membrane. Its subcellular location is the basolateral cell membrane. The protein localises to the cell membrane. It is found in the cytoplasmic vesicle membrane. The protein resides in the golgi apparatus. It localises to the trans-Golgi network membrane. It carries out the reaction H2O(in) = H2O(out). The catalysed reaction is glycerol(in) = glycerol(out). Forms a water-specific channel that provides the plasma membranes of renal collecting duct with high permeability to water, thereby permitting water to move in the direction of an osmotic gradient. Plays an essential role in renal water homeostasis. Could also be permeable to glycerol. This is Aquaporin-2 from Dugong dugon (Dugong).